The chain runs to 439 residues: MNMDILQRQDKGIFDAITAEVRRQTETLELIASENFASRAVMEACGSVMTNKYAEGYPGKRYYGGCEFVDIAENLARDRAKKLFGCDYVNVQPHSGSSANMGVLFAVLKPGDRIMGLDLSHGGHLTHGSKVNFSGQLFEAHSYGVDRETGCIDMNKVEEMALEVRPKLIICGASAYSQGFDFKAFRDVADKVGAFLMADIAHPAGLIAAGLLNDPMPHCHFVTTTTHKTLRGPRGGMIMMGKDFENPLGITVKTKKGSRTKMMSEVIDAEIMPGIQGGPLMHIIAAKGVAFGEALQPEFKDYAVQVRNNAAVMAERFSGLDYQIVSGGTKNHLMLIDLRNKNVTGKVAENLLHDAGITVNKNMVPFDDKSPFVTSGIRIGTPAMTTRGMQESHAENIVGFIDRVISAADSEGIEKVCAEVRSDVKAMCKDLPLNDFGPE.

(6S)-5,6,7,8-tetrahydrofolate is bound by residues Leu-119 and 123–125; that span reads GHL. Lys-228 bears the N6-(pyridoxal phosphate)lysine mark. 370 to 372 provides a ligand contact to (6S)-5,6,7,8-tetrahydrofolate; the sequence is SPF.

It belongs to the SHMT family. Homodimer. It depends on pyridoxal 5'-phosphate as a cofactor.

The protein localises to the cytoplasm. The catalysed reaction is (6R)-5,10-methylene-5,6,7,8-tetrahydrofolate + glycine + H2O = (6S)-5,6,7,8-tetrahydrofolate + L-serine. The protein operates within one-carbon metabolism; tetrahydrofolate interconversion. It participates in amino-acid biosynthesis; glycine biosynthesis; glycine from L-serine: step 1/1. In terms of biological role, catalyzes the reversible interconversion of serine and glycine with tetrahydrofolate (THF) serving as the one-carbon carrier. This reaction serves as the major source of one-carbon groups required for the biosynthesis of purines, thymidylate, methionine, and other important biomolecules. Also exhibits THF-independent aldolase activity toward beta-hydroxyamino acids, producing glycine and aldehydes, via a retro-aldol mechanism. In Chlorobium phaeobacteroides (strain BS1), this protein is Serine hydroxymethyltransferase.